A 376-amino-acid polypeptide reads, in one-letter code: Alpha-centractin (376 aa).

M1 carries the N-acetylmethionine modification.

It belongs to the actin family. ARP1 subfamily. Part of the ACTR1A/ACTB filament around which the dynactin complex is built. The filament contains 8 copies of ACTR1A and 1 ACTB. Interacts with dynein and adapters such as BICD2. Interacts with BCCIP (isoform 2/alpha).

The protein resides in the cytoplasm. It is found in the cytoskeleton. The protein localises to the microtubule organizing center. It localises to the centrosome. Its subcellular location is the cell cortex. In terms of biological role, part of the ACTR1A/ACTB filament around which the dynactin complex is built. The dynactin multiprotein complex activates the molecular motor dynein for ultra-processive transport along microtubules. In Canis lupus familiaris (Dog), this protein is Alpha-centractin (ACTR1A).